We begin with the raw amino-acid sequence, 228 residues long: Octanoyltransferase (228 aa).

In terms of domain architecture, BPL/LPL catalytic spans 30-213; the sequence is NKVEDIMLLL…YFSRVFDFEP (184 aa). Substrate contacts are provided by residues 75-82, 143-145, and 156-158; these read RGGDVTYH, AIG, and GFA. The active-site Acyl-thioester intermediate is the cysteine 174.

Belongs to the LipB family.

It localises to the cytoplasm. It catalyses the reaction octanoyl-[ACP] + L-lysyl-[protein] = N(6)-octanoyl-L-lysyl-[protein] + holo-[ACP] + H(+). The protein operates within protein modification; protein lipoylation via endogenous pathway; protein N(6)-(lipoyl)lysine from octanoyl-[acyl-carrier-protein]: step 1/2. In terms of biological role, catalyzes the transfer of endogenously produced octanoic acid from octanoyl-acyl-carrier-protein onto the lipoyl domains of lipoate-dependent enzymes. Lipoyl-ACP can also act as a substrate although octanoyl-ACP is likely to be the physiological substrate. This chain is Octanoyltransferase, found in Desulforamulus reducens (strain ATCC BAA-1160 / DSM 100696 / MI-1) (Desulfotomaculum reducens).